Reading from the N-terminus, the 118-residue chain is Small ribosomal subunit protein eS24 (118 aa).

Belongs to the eukaryotic ribosomal protein eS24 family.

In Sulfolobus acidocaldarius (strain ATCC 33909 / DSM 639 / JCM 8929 / NBRC 15157 / NCIMB 11770), this protein is Small ribosomal subunit protein eS24.